A 164-amino-acid chain; its full sequence is Phosphatidyl-N-methylethanolamine N-methyltransferase (164 aa).

The segment at residues 1 to 21 (MGLLAAIGVLLPFPFYWWLWT) is an intramembrane region (helical). At 22–30 (NAQSWVNLC) the chain is on the lumenal side. The chain crosses the membrane as a helical span at residues 31 to 52 (GRERDPSTVMARVSHVLKAAQL). Residues 53-69 (LSLFSVASLSWPPPLYF) lie on the Cytoplasmic side of the membrane. A helical membrane pass occupies residues 70 to 90 (WPLMAFGQFLNFRVYQLLGEA). 74–76 (AFG) provides a ligand contact to S-adenosyl-L-methionine. At 91–131 (GTYYGVRFGKNIPWVTEFPFGVIRDPQYVGSIMSLLACLSW) the chain is on the lumenal side. The helical transmembrane segment at 132 to 151 (VPFQYILLWSLGYVFMMFLE) threads the bilayer. Residues 152–164 (SKEDPNARAKSIS) are Cytoplasmic-facing. S-adenosyl-L-methionine is bound at residue 154–155 (ED).

The protein belongs to the class VI-like SAM-binding methyltransferase superfamily. PEMT/PEM2 methyltransferase family.

It is found in the endoplasmic reticulum membrane. The catalysed reaction is a 1,2-diacyl-sn-glycero-3-phospho-N-methylethanolamine + S-adenosyl-L-methionine = a 1,2-diacyl-sn-glycero-3-phospho-N,N-dimethylethanolamine + S-adenosyl-L-homocysteine + H(+). It catalyses the reaction a 1,2-diacyl-sn-glycero-3-phospho-N,N-dimethylethanolamine + S-adenosyl-L-methionine = a 1,2-diacyl-sn-glycero-3-phosphocholine + S-adenosyl-L-homocysteine + H(+). It functions in the pathway phospholipid metabolism; phosphatidylcholine biosynthesis. In terms of biological role, catalyzes the second two steps of the methylation pathway of phosphatidylcholine biosynthesis, the SAM-dependent methylation of phosphatidylmonomethylethanolamine (PMME) to phosphatidyldimethylethanolamine (PDME) and of PDME to phosphatidylcholine (PC). In Arabidopsis thaliana (Mouse-ear cress), this protein is Phosphatidyl-N-methylethanolamine N-methyltransferase (PLMT).